Here is a 465-residue protein sequence, read N- to C-terminus: UDP-N-acetylmuramate--L-alanine ligase (465 aa).

112–118 contributes to the ATP binding site; the sequence is GTHGKTT.

It belongs to the MurCDEF family.

Its subcellular location is the cytoplasm. It catalyses the reaction UDP-N-acetyl-alpha-D-muramate + L-alanine + ATP = UDP-N-acetyl-alpha-D-muramoyl-L-alanine + ADP + phosphate + H(+). It participates in cell wall biogenesis; peptidoglycan biosynthesis. Cell wall formation. The chain is UDP-N-acetylmuramate--L-alanine ligase from Burkholderia cenocepacia (strain ATCC BAA-245 / DSM 16553 / LMG 16656 / NCTC 13227 / J2315 / CF5610) (Burkholderia cepacia (strain J2315)).